We begin with the raw amino-acid sequence, 23 residues long: Potassium channel toxin kappa-KTx 1.2 (23 aa).

2 disulfides stabilise this stretch: Cys-4–Cys-22 and Cys-8–Cys-18. A Cysteine amide modification is found at Cys-22.

The protein belongs to the short scorpion toxin superfamily. Potassium channel inhibitor kappa-KTx family. Kappa-KTx 1 subfamily. In terms of processing, the two disulfide isomers globular (C1-C3, C2-C4) and beads (C1-C2, C3-C4) do not show activity on Kv10.1/KCNH1/EAG1. As to expression, expressed by the venom gland.

The protein localises to the secreted. Shows weak blocking activity on voltage-gated potassium channels Kv10.1/KCNH1/EAG1 (IC(50)=26 uM), Kv1.2/KCNA2 (Kd=150 uM), Kv1.3/KCNA3 (Kd=40 uM), Kv1.6/KCNA3 (16.6% inhibition at 40 uM toxin). The block is dose-dependent, voltage-independent, and reversible. Also shows a weak inhibitory activity on the plant pathogen F.culmorum growth (IC(50)=18.8-37.7 uM). The protein is Potassium channel toxin kappa-KTx 1.2 of Chersonesometrus fulvipes (Indian black scorpion).